A 447-amino-acid chain; its full sequence is MNVLLNPLNRRHRLRYDIPVMPGAFPLVGHLPAIVCDLPRLLRRAERTLGSHFWLDFGPAGHLMTCVDPHAFALLRHKDVSSALIEEIAPELLGGTLVAQDGGAHRQARDAIKAAFLPEGLTQAGIGDLFAPVIRARVQAWRDRGDVTILPETGDLMLKLIFTLMGVPAQDLPGWHRKYRQLLQLIVAPSVDLPGLPLRRGRAARDWIDAQLRQFVRDARAHAARTGLINDMVSAFDRSDDALSDDLLVANIRLLLLAGHDTTASTMAWMVIELARQPMLWDALVEEAQRVGAVPTRHADLEQCPVAEALFRETLRVHPATTLLPRRALQELQLGQRRIPAGTHLCIPLLHFSTSALLHEAPDQFRLARWLQRTEPIRPVDMLQFGTGPHVCIGYHLVWLELVQFSIALALTMHKAGVRPLLLSGVEKGRRYYPTAHPSMTIRIGFS.

Residue cysteine 392 participates in heme binding.

This sequence belongs to the cytochrome P450 family. The cofactor is heme.

Cytochromes P450 are a group of heme-thiolate monooxygenases. They oxidize a variety of structurally unrelated compounds, including steroids, fatty acids, and xenobiotics. This Sinorhizobium fredii (strain NBRC 101917 / NGR234) protein is Cytochrome P450 BJ-4 homolog (cyp117A2).